The primary structure comprises 403 residues: F-box only protein 22 (403 aa).

Met1 carries the post-translational modification N-acetylmethionine. The F-box domain occupies 21–67 (FVLSNLAEVVERVLTFLPAKALLRVACVCRLWRECVRRVLRTHRSVT). At Thr127 the chain carries Phosphothreonine. Ser128 bears the Phosphoserine mark. The residue at position 194 (Lys194) is an N6-acetyllysine.

In terms of assembly, directly interacts with SKP1 and CUL1. Interacts (via C-terminal) with KDM4A. Interacts with TP53. Interacts with MTOR; this interaction promotes 'lys-27'-linked ubiquitination of MTOR. As to quaternary structure, (Microbial infection) Interacts with SARS_COV-2 protein NSP5; this interaction attenuates NSP5-mediated inhibition of innate immunity. Post-translationally, phosphorylated by EIF2AK4 at Thr-127 causes cytoplasmic retention of FBXO22. Predominantly expressed in liver, also enriched in cardiac muscle.

It is found in the cytoplasm. It localises to the nucleus. The protein resides in the myofibril. The protein localises to the sarcomere. Its subcellular location is the z line. In terms of biological role, substrate-recognition component of the SCF (SKP1-CUL1-F-box protein)-type E3 ubiquitin ligase complex that is implicated in the control of various cellular processes such as cell cycle control, transcriptional regulation, DNA damage repair, and apoptosis. Promotes the proteasome-dependent degradation of key sarcomeric proteins, such as alpha-actinin (ACTN2) and filamin-C (FLNC), essential for maintenance of normal contractile function. Acts as a key regulator of histone methylation marks namely H3K9 and H3K36 methylation through the regulation of histone demethylase KDM4A protein levels. In complex with KDM4A, also regulates the abundance of TP53 by targeting methylated TP53 for degradation at the late senescent stage. Under oxidative stress, promotes the ubiquitination and degradation of BACH1. Mechanistically, reactive oxygen species (ROS) covalently modify cysteine residues on the bZIP domain of BACH1, leading to its release from chromatin and making it accessible to FBXO22. Upon amino acid depletion, mediates 'Lys-27'-linked ubiquitination of MTOR and thereby inhibits substrate recruitment to mTORC1. Also inhibits SARS-CoV-2 replication by inducing NSP5 degradation. This Homo sapiens (Human) protein is F-box only protein 22 (FBXO22).